A 276-amino-acid polypeptide reads, in one-letter code: Undecaprenyl-diphosphatase 1 (276 aa).

6 consecutive transmembrane segments (helical) span residues Arg43–Phe63, Ala85–Ile105, Leu109–Ala129, Ala184–Gly204, Ala214–Val234, and Ile254–Ala274.

This sequence belongs to the UppP family.

The protein resides in the cell inner membrane. The catalysed reaction is di-trans,octa-cis-undecaprenyl diphosphate + H2O = di-trans,octa-cis-undecaprenyl phosphate + phosphate + H(+). Functionally, catalyzes the dephosphorylation of undecaprenyl diphosphate (UPP). Confers resistance to bacitracin. In Pseudomonas fluorescens (strain Pf0-1), this protein is Undecaprenyl-diphosphatase 1.